The chain runs to 295 residues: Protein shisa-2 homolog (295 aa).

An N-terminal signal peptide occupies residues Met-1–Ala-33. The Extracellular portion of the chain corresponds to Ser-34–Ser-110. A disordered region spans residues Gly-87–Asp-108. The chain crosses the membrane as a helical span at residues Ala-111 to Leu-131. Residues Gly-132 to Val-295 are Cytoplasmic-facing. The tract at residues Pro-168–Asn-205 is disordered. The span at Ser-169–Ala-197 shows a compositional bias: low complexity.

Belongs to the shisa family.

It is found in the endoplasmic reticulum membrane. Its function is as follows. Plays an essential role in the maturation of presomitic mesoderm cells by individual attenuation of both FGF and WNT signaling. The chain is Protein shisa-2 homolog (SHISA2) from Homo sapiens (Human).